Consider the following 863-residue polypeptide: Dynamin-3 (863 aa).

Residues 28-294 (LLELPQIAVV…LTNHIRDTLP (267 aa)) enclose the Dynamin-type G domain. A G1 motif region spans residues 38 to 45 (GGQSAGKS). A GTP-binding site is contributed by 38–46 (GGQSAGKSS). Residues 64–66 (VTR) form a G2 motif region. The interval 136 to 139 (DLPG) is G3 motif. A G4 motif region spans residues 205–208 (TKLD). Position 205-211 (205-211 (TKLDLMD)) interacts with GTP. Tyrosine 231 bears the Phosphotyrosine mark. The interval 235–238 (VNRS) is G5 motif. GTP is bound at residue 236 to 239 (NRSQ). Lysine 299 is subject to N6-acetyllysine. The PH domain maps to 515–621 (QVIRKGWLTV…WKASLLRAGV (107 aa)). At tyrosine 593 the chain carries Phosphotyrosine. Lysine 594 is subject to N6-acetyllysine. Disordered stretches follow at residues 626-647 (SVGS…SMDP) and 742-863 (ATVS…SLLD). The segment covering 627 to 642 (VGSNKTENDENGQAEN) has biased composition (polar residues). Residues 653–744 (VETIRNLVDS…IIGDINTATV (92 aa)) form the GED domain. Phosphoserine is present on residues serine 763 and serine 767. 2 stretches are compositionally biased toward pro residues: residues 791 to 816 (PAIP…PPFP) and 826 to 849 (PQVP…PSPT). The residue at position 847 (serine 847) is a Phosphoserine.

It belongs to the TRAFAC class dynamin-like GTPase superfamily. Dynamin/Fzo/YdjA family.

The protein resides in the cytoplasm. It localises to the cytoskeleton. The enzyme catalyses GTP + H2O = GDP + phosphate + H(+). Microtubule-associated force-producing protein involved in producing microtubule bundles and able to bind and hydrolyze GTP. Most probably involved in vesicular trafficking processes, in particular endocytosis. The chain is Dynamin-3 (Dnm3) from Mus musculus (Mouse).